Reading from the N-terminus, the 705-residue chain is Calpain-1 catalytic subunit (705 aa).

Residues leucine 48–threonine 347 form the Calpain catalytic domain. Residues cysteine 108, histidine 265, and asparagine 289 contribute to the active site. Positions proline 348 to glutamate 517 are domain III. Positions glutamate 518–aspartate 533 are linker. Residues threonine 530 to isoleucine 565 enclose the EF-hand 1 domain. The interval isoleucine 534–cysteine 704 is domain IV. Positions 549, 551, 556, 589, 591, 593, 595, 600, 619, 621, 623, 625, and 630 each coordinate Ca(2+). EF-hand domains lie at asparagine 606–lysine 641 and valine 671–glycine 705.

This sequence belongs to the peptidase C2 family. As to quaternary structure, heterodimer of large (catalytic) and a small (regulatory) subunit. Requires Ca(2+) as cofactor. The N-terminus is blocked. Ubiquitously expressed.

The protein localises to the cytoplasm. The protein resides in the cell membrane. The catalysed reaction is Broad endopeptidase specificity.. With respect to regulation, activated by micromolar concentrations of calcium and inhibited by calpastatin. Its function is as follows. Calcium-regulated non-lysosomal thiol-protease which catalyze limited proteolysis of substrates involved in cytoskeletal remodeling and signal transduction. This Gallus gallus (Chicken) protein is Calpain-1 catalytic subunit.